A 2419-amino-acid chain; its full sequence is Telomere-associated protein RIF1 (2419 aa).

Disordered regions lie at residues 1–24 (MTAP…VPPG) and 373–408 (SIPS…SPRG). Polar residues predominate over residues 373-385 (SIPSPQGNSSRGS). A phosphoserine mark is found at serine 385, serine 391, serine 779, serine 976, and serine 1005. Threonine 1044 is modified (phosphothreonine). The segment covering 1184-1198 (SSSTETSVVSSSSVS) has biased composition (low complexity). Disordered stretches follow at residues 1184–1594 (SSST…QAVP) and 1613–1637 (RVIL…EKSK). Polar residues-rich tracts occupy residues 1199–1217 (NATF…QTFI) and 1228–1255 (RPFS…TNTD). Phosphothreonine is present on threonine 1215. Serine 1231 and serine 1233 each carry phosphoserine. Residues 1263 to 1272 (REVTNSKSDS) are compositionally biased toward basic and acidic residues. Residues 1289–1302 (AEQSVTKKSKPSLT) show a composition bias toward polar residues. Basic and acidic residues predominate over residues 1323–1345 (HVSENDDHPSEATLEHKDGDPKP). A phosphoserine mark is found at serine 1407, serine 1439, serine 1457, and serine 1498. Basic and acidic residues predominate over residues 1416-1455 (SQERESGQQKKERRKEEEKIISKSPLRIKDDKLPTQKLTD). The segment covering 1457–1467 (SPIQENLTEKG) has biased composition (polar residues). Residue threonine 1504 is modified to Phosphothreonine. A compositionally biased stretch (basic and acidic residues) spans 1507 to 1516 (NLDKSSEKPL). Polar residues predominate over residues 1525 to 1537 (RRASQGLISAVEN). 5 positions are modified to phosphoserine: serine 1528, serine 1538, serine 1540, serine 1542, and serine 1550. Residues 1551-1560 (RKKRSGKWKN) are compositionally biased toward basic residues. 2 positions are modified to phosphoserine: serine 1562 and serine 1565. Positions 1572-1581 (EEKKAEEEVM) are enriched in basic and acidic residues. Residues serine 1680 and serine 1683 each carry the phosphoserine modification. Threonine 1780 is subject to Phosphothreonine. Phosphoserine is present on serine 1784. The interval 1812 to 1836 (ASEAVSEIQGPCSENHSPAEDPGLS) is disordered. Serine 1842 is subject to Phosphoserine. The interaction with condensed chromosomes in telophase stretch occupies residues 1882–2419 (DAFVAADSEK…RWRSPAHENS (538 aa)). 2 disordered regions span residues 1890 to 1914 (EKST…ECEA) and 1929 to 1983 (FNSG…AQMS). A phosphoserine mark is found at serine 1931, serine 2094, serine 2109, serine 2121, serine 2125, serine 2144, serine 2153, serine 2208, serine 2287, serine 2341, serine 2413, and serine 2419. The tract at residues 2119 to 2394 (VWSPLASPST…TGSQLFEMHE (276 aa)) is interaction with ERCC6. A disordered region spans residues 2182–2212 (SPIIKSVKTSPTSHSKHNTTSAKGFLSPGSQ). Over residues 2189 to 2212 (KTSPTSHSKHNTTSAKGFLSPGSQ) the composition is skewed to polar residues.

It belongs to the RIF1 family. Interacts with TP53BP1 (when phosphorylated by ATM). May interact with TRF2. Interacts with SHLD2. Interacts with ERCC6 (via WHD region). Interacts with ASTE1. As to expression, expressed in Sertoli cells, prospermatagonia, early primary spermatocytes, and in oocytes at all stages of their growth. Expressed in embryonic stem (ES) and embryonic germ (EG) cells: expression is lost upon differentiation.

It is found in the nucleus. It localises to the chromosome. The protein resides in the telomere. Its subcellular location is the cytoplasm. The protein localises to the cytoskeleton. It is found in the spindle. Its function is as follows. Key regulator of TP53BP1 that plays a key role in the repair of double-strand DNA breaks (DSBs) in response to DNA damage: acts by promoting non-homologous end joining (NHEJ)-mediated repair of DSBs. In response to DNA damage, interacts with ATM-phosphorylated TP53BP1. Interaction with TP53BP1 leads to dissociate the interaction between NUDT16L1/TIRR and TP53BP1, thereby unmasking the tandem Tudor-like domain of TP53BP1 and allowing recruitment to DNA DSBs. Once recruited to DSBs, RIF1 and TP53BP1 act by promoting NHEJ-mediated repair of DSBs. In the same time, RIF1 and TP53BP1 specifically counteract the function of BRCA1 by blocking DSBs resection via homologous recombination (HR) during G1 phase. Also required for immunoglobulin class-switch recombination (CSR) during antibody genesis, a process that involves the generation of DNA DSBs. Promotes NHEJ of dysfunctional telomeres. The polypeptide is Telomere-associated protein RIF1 (Mus musculus (Mouse)).